The following is an 852-amino-acid chain: Alanine--tRNA ligase (852 aa).

Positions 554, 558, 656, and 660 each coordinate Zn(2+).

This sequence belongs to the class-II aminoacyl-tRNA synthetase family. It depends on Zn(2+) as a cofactor.

It localises to the cytoplasm. The enzyme catalyses tRNA(Ala) + L-alanine + ATP = L-alanyl-tRNA(Ala) + AMP + diphosphate. In terms of biological role, catalyzes the attachment of alanine to tRNA(Ala) in a two-step reaction: alanine is first activated by ATP to form Ala-AMP and then transferred to the acceptor end of tRNA(Ala). Also edits incorrectly charged Ser-tRNA(Ala) and Gly-tRNA(Ala) via its editing domain. This is Alanine--tRNA ligase from Campylobacter curvus (strain 525.92).